A 233-amino-acid chain; its full sequence is Choline-phosphate cytidylyltransferase (233 aa).

Positions 6, 8, 9, 80, 85, and 101 each coordinate CDP-choline. D102 lines the Mg(2+) pocket. Y187 is a binding site for CDP-choline. Residues E213 and D215 each coordinate Mg(2+).

Belongs to the LicC/PntC cytidylyltransferase family. Mg(2+) serves as cofactor.

The catalysed reaction is phosphocholine + CTP + H(+) = CDP-choline + diphosphate. Its pathway is lipopolysaccharide biosynthesis. Cytidylyltransferase involved in the biosynthesis of lipopolysaccharides (LPS), a necessary component and antigenic determinant of the outer membrane that has been shown to be an important factor in the host-parasite interaction in a number of Gram-negative species. Catalyzes the activation of phosphocholine (P-Cho) to CDP-choline (CDP-Cho). LicC is critical for the expression of the 6A2-specific epitope. This Haemophilus influenzae (strain ATCC 51907 / DSM 11121 / KW20 / Rd) protein is Choline-phosphate cytidylyltransferase.